The primary structure comprises 78 residues: U7-lycotoxin-Ls1d (78 aa).

Positions 1–22 are cleaved as a signal peptide; the sequence is MKLIIFTGLALLLIVSLIDVEA. A propeptide spanning residues 23–26 is cleaved from the precursor; sequence QNEG.

Belongs to the neurotoxin 19 (CSTX) family. 07 (U7-Lctx) subfamily. In terms of processing, contains 4 disulfide bonds. As to expression, expressed by the venom gland.

The protein resides in the secreted. This chain is U7-lycotoxin-Ls1d, found in Lycosa singoriensis (Wolf spider).